We begin with the raw amino-acid sequence, 552 residues long: Carboxypeptidase Y homolog A (552 aa).

Positions 1–18 (MRIATSTLLVGAASAAFA) are cleaved as a signal peptide. A propeptide spanning residues 19–133 (PQDGTQRVLN…KLDNYNLRAR (115 aa)) is cleaved from the precursor. Intrachain disulfides connect Cys187-Cys427, Cys321-Cys335, Cys345-Cys368, Cys352-Cys361, and Cys390-Cys397. Asn218 carries N-linked (GlcNAc...) asparagine glycosylation. The active site involves Ser274. Residue Asp466 is part of the active site. Asn516 carries N-linked (GlcNAc...) asparagine glycosylation. Residue His527 is part of the active site.

It belongs to the peptidase S10 family.

The protein localises to the vacuole. It catalyses the reaction Release of a C-terminal amino acid with broad specificity.. Vacuolar carboxypeptidase involved in degradation of small peptides. Digests preferentially peptides containing an aliphatic or hydrophobic residue in P1' position, as well as methionine, leucine or phenylalanine in P1 position of ester substrate. In Pyricularia oryzae (strain 70-15 / ATCC MYA-4617 / FGSC 8958) (Rice blast fungus), this protein is Carboxypeptidase Y homolog A (CPYA).